The following is a 353-amino-acid chain: GDP-mannose transporter (353 aa).

The Cytoplasmic segment spans residues 1 to 31 (MGLLLSYLFGYIFYSVNKKFHIMEKFGASNS). A helical membrane pass occupies residues 32-52 (IVNNGPVSIFAYCASSILMTV). The Lumenal segment spans residues 53–66 (TNKFVVGAYEFNLN). Residues 67 to 87 (FFLLAVQAAVCLVTIATLKGL) traverse the membrane as a helical segment. Residues 88 to 102 (GIITYRQFNKDEAKK) are Cytoplasmic-facing. The helical transmembrane segment at 103–122 (WFPIAFLLVLMIYTSSKALQ) threads the bilayer. At 123 to 125 (YLS) the chain is on the lumenal side. Residues 126–148 (IPVYTIFKNLTIILIAYGEVIWF) traverse the membrane as a helical segment. Topologically, residues 149 to 154 (GGKVTT) are cytoplasmic. The chain crosses the membrane as a helical span at residues 155–172 (MALGSFILMVLSSVIAYY). Residues 173 to 187 (GDTAETGEKTAEMHL) lie on the Lumenal side of the membrane. Residues 188-208 (LYLGYAWMFTNCFSSAAFVLI) traverse the membrane as a helical segment. The Cytoplasmic portion of the chain corresponds to 209-227 (MRKRIKLTNFKDFDTMYYN). Residues 228–248 (NLLSLPLLLVFSFLFEDWSSV) form a helical membrane-spanning segment. Residues 249–262 (NLNKNFPPDNRNTT) are Lumenal-facing. N-linked (GlcNAc...) asparagine glycosylation occurs at N260. The helical transmembrane segment at 263–283 (IFVMILSGASSVGISYCSAWC) threads the bilayer. At 284–290 (VRVTSST) the chain is on the cytoplasmic side. The helical transmembrane segment at 291 to 313 (TYSMVGALNKLPIALSGLVFFNA) threads the bilayer. Residues 314–316 (AVN) are Lumenal-facing. Residues 317–336 (FWSVSSIFVGFLAGVFYAVA) form a helical membrane-spanning segment. Topologically, residues 337-353 (KQKQQKENAQQLPVANK) are cytoplasmic.

This sequence belongs to the TPT transporter family. SLC35D subfamily. In terms of assembly, homooligomer.

It is found in the golgi apparatus membrane. The protein localises to the cytoplasmic vesicle membrane. The protein resides in the endoplasmic reticulum membrane. Functionally, involved in the import of GDP-mannose from the cytoplasm into the Golgi lumen. In Meyerozyma guilliermondii (strain ATCC 6260 / CBS 566 / DSM 6381 / JCM 1539 / NBRC 10279 / NRRL Y-324) (Yeast), this protein is GDP-mannose transporter (VRG4).